A 158-amino-acid chain; its full sequence is NADH-quinone oxidoreductase subunit B (158 aa).

4 residues coordinate [4Fe-4S] cluster: Cys36, Cys37, Cys101, and Cys131.

Belongs to the complex I 20 kDa subunit family. As to quaternary structure, NDH-1 is composed of 14 different subunits. Subunits NuoB, C, D, E, F, and G constitute the peripheral sector of the complex. It depends on [4Fe-4S] cluster as a cofactor.

It localises to the cell inner membrane. The catalysed reaction is a quinone + NADH + 5 H(+)(in) = a quinol + NAD(+) + 4 H(+)(out). In terms of biological role, NDH-1 shuttles electrons from NADH, via FMN and iron-sulfur (Fe-S) centers, to quinones in the respiratory chain. The immediate electron acceptor for the enzyme in this species is believed to be ubiquinone. Couples the redox reaction to proton translocation (for every two electrons transferred, four hydrogen ions are translocated across the cytoplasmic membrane), and thus conserves the redox energy in a proton gradient. The sequence is that of NADH-quinone oxidoreductase subunit B from Francisella philomiragia subsp. philomiragia (strain ATCC 25017 / CCUG 19701 / FSC 153 / O#319-036).